The primary structure comprises 276 residues: Large ribosomal subunit protein uL2 (276 aa).

Positions 224–276 (VMNPVDHPHGGGEGKAPIGRKSPMTPWGKPTLGFKTRKKKNKSDKFIIRRRKK) are disordered. Positions 258–276 (KTRKKKNKSDKFIIRRRKK) are enriched in basic residues.

Belongs to the universal ribosomal protein uL2 family. Part of the 50S ribosomal subunit. Forms a bridge to the 30S subunit in the 70S ribosome.

One of the primary rRNA binding proteins. Required for association of the 30S and 50S subunits to form the 70S ribosome, for tRNA binding and peptide bond formation. It has been suggested to have peptidyltransferase activity; this is somewhat controversial. Makes several contacts with the 16S rRNA in the 70S ribosome. In Geobacillus sp. (strain WCH70), this protein is Large ribosomal subunit protein uL2.